The sequence spans 251 residues: Adenosine 5'-phosphosulfate reductase (251 aa).

The [4Fe-4S] cluster site is built by Cys-121, Cys-122, Cys-204, and Cys-207. The active-site Nucleophile; cysteine thiosulfonate intermediate is the Cys-232.

This sequence belongs to the PAPS reductase family. CysH subfamily. [4Fe-4S] cluster serves as cofactor.

It localises to the cytoplasm. It carries out the reaction [thioredoxin]-disulfide + sulfite + AMP + 2 H(+) = adenosine 5'-phosphosulfate + [thioredoxin]-dithiol. Its pathway is sulfur metabolism; hydrogen sulfide biosynthesis; sulfite from sulfate. Its function is as follows. Catalyzes the formation of sulfite from adenosine 5'-phosphosulfate (APS) using thioredoxin as an electron donor. This chain is Adenosine 5'-phosphosulfate reductase, found in Sinorhizobium fredii (strain USDA 257).